We begin with the raw amino-acid sequence, 236 residues long: 2-C-methyl-D-erythritol 4-phosphate cytidylyltransferase (236 aa).

The protein belongs to the IspD/TarI cytidylyltransferase family. IspD subfamily. As to quaternary structure, homodimer.

The catalysed reaction is 2-C-methyl-D-erythritol 4-phosphate + CTP + H(+) = 4-CDP-2-C-methyl-D-erythritol + diphosphate. It participates in isoprenoid biosynthesis; isopentenyl diphosphate biosynthesis via DXP pathway; isopentenyl diphosphate from 1-deoxy-D-xylulose 5-phosphate: step 2/6. Its function is as follows. Catalyzes the formation of 4-diphosphocytidyl-2-C-methyl-D-erythritol from CTP and 2-C-methyl-D-erythritol 4-phosphate (MEP). The protein is 2-C-methyl-D-erythritol 4-phosphate cytidylyltransferase of Salmonella arizonae (strain ATCC BAA-731 / CDC346-86 / RSK2980).